The sequence spans 624 residues: tRNA uridine 5-carboxymethylaminomethyl modification enzyme MnmG (624 aa).

Residues 13–18, V125, and S180 each bind FAD; that span reads GGGHAG. 273-287 contributes to the NAD(+) binding site; sequence GPRYCPSIEDKIVRF. FAD is bound at residue Q370.

The protein belongs to the MnmG family. In terms of assembly, homodimer. Heterotetramer of two MnmE and two MnmG subunits. FAD is required as a cofactor.

It localises to the cytoplasm. Its function is as follows. NAD-binding protein involved in the addition of a carboxymethylaminomethyl (cmnm) group at the wobble position (U34) of certain tRNAs, forming tRNA-cmnm(5)s(2)U34. This is tRNA uridine 5-carboxymethylaminomethyl modification enzyme MnmG from Legionella pneumophila (strain Lens).